The sequence spans 166 residues: Large ribosomal subunit protein uL10 (166 aa).

Belongs to the universal ribosomal protein uL10 family. Part of the ribosomal stalk of the 50S ribosomal subunit. The N-terminus interacts with L11 and the large rRNA to form the base of the stalk. The C-terminus forms an elongated spine to which L12 dimers bind in a sequential fashion forming a multimeric L10(L12)X complex.

Functionally, forms part of the ribosomal stalk, playing a central role in the interaction of the ribosome with GTP-bound translation factors. This Alkaliphilus metalliredigens (strain QYMF) protein is Large ribosomal subunit protein uL10.